Consider the following 446-residue polypeptide: Methylenetetrahydrofolate--tRNA-(uracil-5-)-methyltransferase TrmFO (446 aa).

9–14 (GGGMAG) serves as a coordination point for FAD.

It belongs to the MnmG family. TrmFO subfamily. FAD serves as cofactor.

It is found in the cytoplasm. It catalyses the reaction uridine(54) in tRNA + (6R)-5,10-methylene-5,6,7,8-tetrahydrofolate + NADH + H(+) = 5-methyluridine(54) in tRNA + (6S)-5,6,7,8-tetrahydrofolate + NAD(+). The catalysed reaction is uridine(54) in tRNA + (6R)-5,10-methylene-5,6,7,8-tetrahydrofolate + NADPH + H(+) = 5-methyluridine(54) in tRNA + (6S)-5,6,7,8-tetrahydrofolate + NADP(+). In terms of biological role, catalyzes the folate-dependent formation of 5-methyl-uridine at position 54 (M-5-U54) in all tRNAs. This Ruegeria sp. (strain TM1040) (Silicibacter sp.) protein is Methylenetetrahydrofolate--tRNA-(uracil-5-)-methyltransferase TrmFO.